Here is a 386-residue protein sequence, read N- to C-terminus: Succinate--CoA ligase [ADP-forming] subunit beta (386 aa).

One can recognise an ATP-grasp domain in the interval 9–244 (KDLLTSYQLP…PSQENIRDVL (236 aa)). Residues lysine 46, 53–55 (GRG), valine 102, and glutamate 107 each bind ATP. Asparagine 199 and aspartate 213 together coordinate Mg(2+). Substrate is bound by residues asparagine 264 and 321-323 (GIM).

This sequence belongs to the succinate/malate CoA ligase beta subunit family. In terms of assembly, heterotetramer of two alpha and two beta subunits. The cofactor is Mg(2+).

The catalysed reaction is succinate + ATP + CoA = succinyl-CoA + ADP + phosphate. It catalyses the reaction GTP + succinate + CoA = succinyl-CoA + GDP + phosphate. Its pathway is carbohydrate metabolism; tricarboxylic acid cycle; succinate from succinyl-CoA (ligase route): step 1/1. Its function is as follows. Succinyl-CoA synthetase functions in the citric acid cycle (TCA), coupling the hydrolysis of succinyl-CoA to the synthesis of either ATP or GTP and thus represents the only step of substrate-level phosphorylation in the TCA. The beta subunit provides nucleotide specificity of the enzyme and binds the substrate succinate, while the binding sites for coenzyme A and phosphate are found in the alpha subunit. The chain is Succinate--CoA ligase [ADP-forming] subunit beta from Chlamydia muridarum (strain MoPn / Nigg).